The sequence spans 240 residues: Ornithine decarboxylase antizyme (240 aa).

2 disordered regions span residues 18–45 (RSEPISSSNRATKRTISSSSSSSSSSAG) and 69–95 (DHDRASPLKEYNRKTSIDSTTTASSEF). Polar residues predominate over residues 21 to 33 (PISSSNRATKRTI). The segment covering 34–43 (SSSSSSSSSS) has biased composition (low complexity). Residues 69-84 (DHDRASPLKEYNRKTS) are compositionally biased toward basic and acidic residues. Polar residues predominate over residues 85 to 95 (IDSTTTASSEF).

Belongs to the ODC antizyme family. In terms of assembly, interacts with ODC1 and thereby sterically blocks ODC homodimerization. As to expression, preferentially expressed in adult female midguts.

Its function is as follows. Ornithine decarboxylase (ODC) antizyme protein that negatively regulates ODC activity and intracellular polyamine biosynthesis and uptake in response to increased intracellular polyamine levels. Binds to ODC monomers, inhibiting the assembly of the functional ODC homodimer, and targets the monomers for ubiquitin-independent proteolytic destruction by the 26S proteasome. The polypeptide is Ornithine decarboxylase antizyme (Oda) (Aedes aegypti (Yellowfever mosquito)).